A 308-amino-acid chain; its full sequence is UPF0282 protein STK_23220 (308 aa).

It belongs to the UPF0282 family.

This is UPF0282 protein STK_23220 from Sulfurisphaera tokodaii (strain DSM 16993 / JCM 10545 / NBRC 100140 / 7) (Sulfolobus tokodaii).